The sequence spans 279 residues: MGTIKIVTDSSITIEPELIKALDITVVPLSVMIDSKLYSDNDLKEEGHFLSLMKASKSLPKTSQPPVGLFAETYENLVKKGVTDIVAIHLSPALSGTIEASRQGAEIAETPVTVLDSGFTDQAMKFQVVEAAKMAKAGASLNEILAAVQAIKSKTELYIGVSTLENLVKGGRIGRVTGVLSSLLNVKVVMALKNDELKTLVKGRGNKTFTKWLDSYLAKNSHRPIAEIAISYAGEASLALTLKERIAAYYNHSISVLETGSIIQTHTGEGAFAVMVRYE.

Positions 4-278 (IKIVTDSSIT…EGAFAVMVRY (275 aa)) constitute a DegV domain. Thr-62 and Ser-95 together coordinate hexadecanoate.

Functionally, may bind long-chain fatty acids, such as palmitate, and may play a role in lipid transport or fatty acid metabolism. This Streptococcus pyogenes serotype M3 (strain ATCC BAA-595 / MGAS315) protein is DegV domain-containing protein SpyM3_1149.